Reading from the N-terminus, the 259-residue chain is Hydroxyacylglutathione hydrolase (259 aa).

7 residues coordinate Zn(2+): His-56, His-58, Asp-60, His-61, His-112, Asp-133, and His-171. Residues 224–238 (RTRETSVKEKADERS) show a composition bias toward basic and acidic residues. Residues 224–245 (RTRETSVKEKADERSSGQNTSQ) form a disordered region.

This sequence belongs to the metallo-beta-lactamase superfamily. Glyoxalase II family. Monomer. The cofactor is Zn(2+).

The catalysed reaction is an S-(2-hydroxyacyl)glutathione + H2O = a 2-hydroxy carboxylate + glutathione + H(+). Its pathway is secondary metabolite metabolism; methylglyoxal degradation; (R)-lactate from methylglyoxal: step 2/2. Thiolesterase that catalyzes the hydrolysis of S-D-lactoyl-glutathione to form glutathione and D-lactic acid. The protein is Hydroxyacylglutathione hydrolase of Pseudomonas savastanoi pv. phaseolicola (strain 1448A / Race 6) (Pseudomonas syringae pv. phaseolicola (strain 1448A / Race 6)).